Reading from the N-terminus, the 1369-residue chain is Neurofascin (1369 aa).

An N-terminal signal peptide occupies residues 1 to 25 (MVLHSHQLTYAGIAFALCLHHLISA). Over 26 to 1235 (IEVPLDSNIQ…NHVDIATQGW (1210 aa)) the chain is Extracellular. Ig-like C2-type domains are found at residues 42–138 (PTIT…LQVS) and 144–231 (PKEK…NPYT). 2 disulfide bridges follow: C64-C119 and C163-C214. N241, N247, and N323 each carry an N-linked (GlcNAc...) asparagine glycan. 4 Ig-like C2-type domains span residues 262–350 (PSFM…ISVR), 355–442 (PYWL…AFVS), 448–535 (PRIL…VRLE), and 539–626 (PTRI…AYLT). 2 cysteine pairs are disulfide-bonded: C286-C334 and C376-C426. 3 N-linked (GlcNAc...) asparagine glycosylation sites follow: N427, N464, and N501. Cystine bridges form between C470/C519 and C561/C610. 4 Fibronectin type-III domains span residues 645 to 740 (RPRD…TSGA), 745 to 838 (NPTG…SGED), 843 to 945 (APTD…TPEG), and 949 to 1057 (SPRY…TPAS). A glycan (N-linked (GlcNAc...) asparagine) is linked at N692. The span at 730 to 739 (MPSERYQTSG) shows a compositional bias: polar residues. Positions 730–753 (MPSERYQTSGARPEINPTGVQGAG) are disordered. N767, N793, N853, N994, and N1009 each carry an N-linked (GlcNAc...) asparagine glycan. The segment at 1078–1097 (TTATPTTETPPTEIPTTAIP) is disordered. 4 N-linked (GlcNAc...) asparagine glycosylation sites follow: N1133, N1150, N1156, and N1171. One can recognise a Fibronectin type-III 5 domain in the interval 1133 to 1222 (NGSSIWDIRA…SYITFTTSSA (90 aa)). A helical transmembrane segment spans residues 1236 to 1256 (FIGLMCAIALLVLILLIVCFI). Over 1257-1369 (KRSRGGKYPV…SPVNAIYSLA (113 aa)) the chain is Cytoplasmic. Composition is skewed to basic and acidic residues over residues 1266–1282 (VRDN…KNVE) and 1289–1298 (RSLESDEDNK). The segment at 1266–1369 (VRDNKDEHLN…SPVNAIYSLA (104 aa)) is disordered. The segment covering 1300–1313 (LPNSQTSLDGTIKQ) has biased composition (polar residues).

The protein belongs to the immunoglobulin superfamily. L1/neurofascin/NgCAM family. Post-translationally, N-glycosylated and O-glycosylated. May be proteolytically cleaved at Arg-636.

Its subcellular location is the cell membrane. In terms of biological role, cell adhesion, ankyrin-binding protein which may be involved in neurite extension, axonal guidance, synaptogenesis, myelination and neuron-glial cell interactions. This is Neurofascin (NFASC) from Gallus gallus (Chicken).